Reading from the N-terminus, the 142-residue chain is Putative pre-16S rRNA nuclease (142 aa).

The protein belongs to the YqgF nuclease family.

The protein localises to the cytoplasm. Functionally, could be a nuclease involved in processing of the 5'-end of pre-16S rRNA. The polypeptide is Putative pre-16S rRNA nuclease (Lawsonia intracellularis (strain PHE/MN1-00)).